The chain runs to 461 residues: Phytase A (461 aa).

Cys-22 and Cys-31 are joined by a disulfide. 6 residues coordinate 1D-myo-inositol hexakisphosphate: Gln-41, Tyr-42, Arg-71, His-72, Arg-75, and Thr-78. Intrachain disulfides connect Cys-61–Cys-405, Cys-205–Cys-456, Cys-254–Cys-272, and Cys-427–Cys-435. Catalysis depends on His-72, which acts as the Nucleophile. Asn-95 and Asn-110 each carry an N-linked (GlcNAc...) asparagine glycan. Arg-155 serves as a coordination point for 1D-myo-inositol hexakisphosphate. Asn-197 carries N-linked (GlcNAc...) asparagine glycosylation. Lys-291 serves as a coordination point for 1D-myo-inositol hexakisphosphate. Residues Asn-329 and Asn-343 are each glycosylated (N-linked (GlcNAc...) asparagine). The 1D-myo-inositol hexakisphosphate site is built by His-352 and Asp-353. N-linked (GlcNAc...) asparagine glycosylation is present at Asn-367.

The protein belongs to the histidine acid phosphatase family. In terms of assembly, monomer. In terms of processing, glycosylated.

The protein resides in the secreted. It catalyses the reaction 1D-myo-inositol hexakisphosphate + H2O = 1D-myo-inositol 1,2,4,5,6-pentakisphosphate + phosphate. The enzyme catalyses 1D-myo-inositol 1,2,4,5,6-pentakisphosphate + H2O = 1D-myo-inositol 1,2,5,6-tetrakisphosphate + phosphate. The catalysed reaction is 1D-myo-inositol 1,2,5,6-tetrakisphosphate + H2O = 1D-myo-inositol 1,2,6-trisphosphate + phosphate. It carries out the reaction 1D-myo-inositol 1,2,6-trisphosphate + H2O = 1D-myo-inositol 1,2-bisphosphate + phosphate. It catalyses the reaction 1D-myo-inositol 1,2-bisphosphate + H2O = 1D-myo-inositol 2-phosphate + phosphate. In terms of biological role, catalyzes the phosphate monoester hydrolysis of phytic acid (myo-inositol hexakisphosphate), which results in the stepwise formation of myo-inositol pentakis-, tetrakis-, tris-, bis-, and monophosphates, as well as the liberation of inorganic phosphate. Myo-inositol 2-monophosphate is the end product. The polypeptide is Phytase A (Penicillium oxalicum).